The primary structure comprises 677 residues: Methionine--tRNA ligase (677 aa).

The short motif at 15–25 (PYANGSIHLGH) is the 'HIGH' region element. The Zn(2+) site is built by Cys146, Cys149, Cys159, and Cys162. Positions 333–337 (KMSKS) match the 'KMSKS' region motif. Lys336 contributes to the ATP binding site. Residues 575 to 677 (DFAKIDLRVA…DGAKPGQQVK (103 aa)) form the tRNA-binding domain.

It belongs to the class-I aminoacyl-tRNA synthetase family. MetG type 1 subfamily. Homodimer. Zn(2+) serves as cofactor.

The protein localises to the cytoplasm. The enzyme catalyses tRNA(Met) + L-methionine + ATP = L-methionyl-tRNA(Met) + AMP + diphosphate. In terms of biological role, is required not only for elongation of protein synthesis but also for the initiation of all mRNA translation through initiator tRNA(fMet) aminoacylation. This chain is Methionine--tRNA ligase, found in Salmonella choleraesuis (strain SC-B67).